The primary structure comprises 367 residues: Pre-small/secreted glycoprotein (367 aa).

The N-terminal stretch at 1–33 (MGSGYQLLQLPRERFRKTSFLVWVIILFQRAIS) is a signal peptide. Asn41 carries an N-linked (GlcNAc...) asparagine; by host glycan. 2 cysteine pairs are disulfide-bonded: Cys109/Cys136 and Cys122/Cys148. 4 N-linked (GlcNAc...) asparagine; by host glycosylation sites follow: Asn205, Asn239, Asn258, and Asn269.

Belongs to the filoviruses glycoprotein family. Homodimer; disulfide-linked. The homodimers are linked by two disulfide bonds in a parallel orientation. As to quaternary structure, monomer. This precursor is processed into mature sGP and delta-peptide by host furin or furin-like proteases. The cleavage site corresponds to the furin optimal cleavage sequence [KR]-X-[KR]-R. In terms of processing, N-glycosylated. Post-translationally, O-glycosylated.

The protein localises to the secreted. Functionally, seems to possess an anti-inflammatory activity as it can reverse the barrier-decreasing effects of TNF alpha. Might therefore contribute to the lack of inflammatory reaction seen during infection in spite the of extensive necrosis and massive virus production. Does not seem to be involved in activation of primary macrophages. Does not seem to interact specifically with neutrophils. In terms of biological role, viroporin that permeabilizes mammalian cell plasma membranes. It acts by altering permeation of ionic compounds and small molecules. This activity may lead to viral enterotoxic activity. The protein is Pre-small/secreted glycoprotein (GP) of Reston ebolavirus (strain Philippines-96) (REBOV).